Consider the following 319-residue polypeptide: Phosphate acyltransferase (319 aa).

The protein belongs to the PlsX family. Homodimer. Probably interacts with PlsY.

The protein resides in the cytoplasm. The catalysed reaction is a fatty acyl-[ACP] + phosphate = an acyl phosphate + holo-[ACP]. It functions in the pathway lipid metabolism; phospholipid metabolism. Catalyzes the reversible formation of acyl-phosphate (acyl-PO(4)) from acyl-[acyl-carrier-protein] (acyl-ACP). This enzyme utilizes acyl-ACP as fatty acyl donor, but not acyl-CoA. In Chlamydia muridarum (strain MoPn / Nigg), this protein is Phosphate acyltransferase.